Consider the following 339-residue polypeptide: Dihydroorotate dehydrogenase (quinone) (339 aa).

FMN-binding positions include Ala-61–Lys-65 and Thr-85. Lys-65 provides a ligand contact to substrate. Asn-110–Phe-114 serves as a coordination point for substrate. FMN is bound by residues Asn-138 and Asn-171. Asn-171 contacts substrate. The active-site Nucleophile is the Ser-174. Asn-176 lines the substrate pocket. Lys-216 and Thr-244 together coordinate FMN. Asn-245 to Thr-246 lines the substrate pocket. FMN is bound by residues Gly-267, Gly-296, and Tyr-317–Ser-318.

It belongs to the dihydroorotate dehydrogenase family. Type 2 subfamily. As to quaternary structure, monomer. FMN is required as a cofactor.

Its subcellular location is the cell membrane. It carries out the reaction (S)-dihydroorotate + a quinone = orotate + a quinol. It participates in pyrimidine metabolism; UMP biosynthesis via de novo pathway; orotate from (S)-dihydroorotate (quinone route): step 1/1. In terms of biological role, catalyzes the conversion of dihydroorotate to orotate with quinone as electron acceptor. The polypeptide is Dihydroorotate dehydrogenase (quinone) (Pseudomonas fluorescens (strain ATCC BAA-477 / NRRL B-23932 / Pf-5)).